The primary structure comprises 87 residues: U3-theraphotoxin-Hhn1j (87 aa).

An N-terminal signal peptide occupies residues 1–24; sequence MVNMKASMFLTFAGLVLLFVVCYA. A propeptide spanning residues 25–52 is cleaved from the precursor; the sequence is SESEEKEFPKEMLSSIFAVDNDFKQEER. 3 disulfide bridges follow: cysteine 54–cysteine 67, cysteine 61–cysteine 72, and cysteine 66–cysteine 79.

This sequence belongs to the neurotoxin 10 (Hwtx-1) family. 51 (Hntx-8) subfamily. Hntx-8 sub-subfamily. Expressed by the venom gland.

The protein resides in the secreted. Its function is as follows. Ion channel inhibitor. The chain is U3-theraphotoxin-Hhn1j from Cyriopagopus hainanus (Chinese bird spider).